Here is a 308-residue protein sequence, read N- to C-terminus: MTKTSNSSYLVILYYQYVPIKDPQTFRNQHFKYCESLGLLGRIIVAQEGINGTLSGPKEQIHKYIDQLKQDVRFCNTVFKIENVDAQVFPRLSIKVKPELVNLSLEEKVDLTKDKGAYLAPQEFLQALQEKDVLILDARNDYEYDLGHFRNAVNPNIRHFRDLPNWVKQNTHLLKNKKIVTYCTGGVRCEKFSTFLKKEGFVDVYQLEGGIISYGKHPETQGVLWDGQMYVFDQRIAVTVNQKEHVIVGKDYFDGTPCERYINCSNPQCNKQILCHEHNEHKYLGACSDKCSAHPQNRYLKKHNNKTS.

Residues 129–223 (QEKDVLILDA…YGKHPETQGV (95 aa)) form the Rhodanese domain. The active-site Cysteine persulfide intermediate is cysteine 183.

Belongs to the TrhO family.

It catalyses the reaction uridine(34) in tRNA + AH2 + O2 = 5-hydroxyuridine(34) in tRNA + A + H2O. Catalyzes oxygen-dependent 5-hydroxyuridine (ho5U) modification at position 34 in tRNAs. This Aster yellows witches'-broom phytoplasma (strain AYWB) protein is tRNA uridine(34) hydroxylase.